Here is a 478-residue protein sequence, read N- to C-terminus: Ubiquitin carboxyl-terminal hydrolase calypso (478 aa).

Residues 11–239 enclose the UCH catalytic domain; the sequence is GWLELESDPG…IRFNLMAVVP (229 aa). Cys-97 (nucleophile) is an active-site residue. His-176 acts as the Proton donor in catalysis. A ULD domain is found at 400 to 428; that stretch reads NYDEFICTFLSMLAHQGELGDLVSQHLIT. Residues 430-478 are positively charged C-terminal tail required for binding nucleosomes; that stretch reads RKPNMGSVQNSGSRGVVRNYNKKTTTNGSSPKTPSSKRRRGRTKYRKRK. Positions 432 to 442 are enriched in polar residues; sequence PNMGSVQNSGS. Residues 432–478 are disordered; it reads PNMGSVQNSGSRGVVRNYNKKTTTNGSSPKTPSSKRRRGRTKYRKRK. The segment covering 464-478 has biased composition (basic residues); it reads SSKRRRGRTKYRKRK.

This sequence belongs to the peptidase C12 family. BAP1 subfamily. In terms of assembly, catalytic component of the polycomb repressive deubiquitinase (PR-DUB) complex, at least composed of caly/calypso, Asx and sba (MBD5/6 homolog). The PR-DUB complex associates with nucleosomes to mediate deubiquitination of histone H2AK118ub1 substrates; the association requires the positively charged C-terminal tail of caly, probably due to direct binding of DNA. Interacts (via ULD domain) with Asx (via DEUBAD domain); the interaction produces a stable heterodimer with a composite binding site for ubiquitin. Homodimerizes (via coiled-coil hinge-region between the UCH and ULD domains) to mediate assembly of 2 copies of the caly-Asx heterodimer into a bisymmetric tetramer; dimerization enhances PR-DUB association with nucleosomes.

It is found in the nucleus. The enzyme catalyses Thiol-dependent hydrolysis of ester, thioester, amide, peptide and isopeptide bonds formed by the C-terminal Gly of ubiquitin (a 76-residue protein attached to proteins as an intracellular targeting signal).. Its function is as follows. Catalytic component of the polycomb repressive deubiquitinase (PR-DUB) complex, a complex that specifically mediates deubiquitination of histone H2A monoubiquitinated at 'Lys-119' (H2AK118ub1). Mediates bisymmetric organization of the PR-DUB complex and is involved in association with nucleosomes to mediate deubiquitination. Does not deubiquitinate monoubiquitinated histone H2B. Required to maintain the transcriptionally repressive state of homeotic genes throughout development. The PR-DUB complex has weak or no activity toward 'Lys-48'- and 'Lys-63'-linked polyubiquitin chains. Polycomb group (PcG) protein. In Aedes aegypti (Yellowfever mosquito), this protein is Ubiquitin carboxyl-terminal hydrolase calypso.